The sequence spans 348 residues: Succinoglycan biosynthesis protein ExoO (348 aa).

Residues 322-348 (HSAPRAAPVTAAAERSPLGNDPRISKG) are disordered. Residues 324-334 (APRAAPVTAAA) are compositionally biased toward low complexity.

Belongs to the glycosyltransferase 2 family.

The protein localises to the cytoplasm. It participates in glycan metabolism; exopolysaccharide biosynthesis. Its function is as follows. Glycosyltransferase required for the synthesis of succinoglycan (EPS I). Needed for the addition of the fifth sugar (glucose), catalyzes the formation of a beta-1,6 linkage between the fourth and fifth sugar. This chain is Succinoglycan biosynthesis protein ExoO (exoO), found in Rhizobium meliloti (strain 1021) (Ensifer meliloti).